The sequence spans 111 residues: Large ribosomal subunit protein uL23 (111 aa).

Belongs to the universal ribosomal protein uL23 family. In terms of assembly, part of the 50S ribosomal subunit. Contacts protein L29, and trigger factor when it is bound to the ribosome.

Functionally, one of the early assembly proteins it binds 23S rRNA. One of the proteins that surrounds the polypeptide exit tunnel on the outside of the ribosome. Forms the main docking site for trigger factor binding to the ribosome. This Chlamydia trachomatis serovar L2 (strain ATCC VR-902B / DSM 19102 / 434/Bu) protein is Large ribosomal subunit protein uL23.